We begin with the raw amino-acid sequence, 349 residues long: MAILLQKSKVMKIAGMSLAMLLAACSSDQSYKRQVNGDYAYLEAPPLKALNVPAGMILPLQNGEYDIPPTISKGLIGKELDIRPPSQALALLSGSRTENSIKSSKLLLENTPENSNLWSQINNVLLKKGDKISQRDDANQTLVTDWIEWQRTDEDVPYQTRHRISIAHQNYQIELSVANEGLRQGGQQVTDPVEIQRYNALMLNELIEGVNRQRERMSDNPAAHNLGPLDVQSGGDTSGLPQMIVRAPYNIVWDRLPAALEKVGMKVGNRSRSTGSITVAYKSLSTSEWKSMGVNEPSISEGDYKLQIGDLNNRSSLQFISDKGKPLTQVQNDELVAVLKAAFSQTAGL.

A signal peptide spans 1-24 (MAILLQKSKVMKIAGMSLAMLLAA). Cys-25 carries N-palmitoyl cysteine lipidation. Cys-25 is lipidated: S-diacylglycerol cysteine.

It belongs to the BamC family. In terms of assembly, part of the Bam complex, which is composed of the outer membrane protein BamA, and four lipoproteins BamB, BamC, BamD and BamE.

Its subcellular location is the cell outer membrane. Part of the outer membrane protein assembly complex, which is involved in assembly and insertion of beta-barrel proteins into the outer membrane. This Photorhabdus asymbiotica subsp. asymbiotica (strain ATCC 43949 / 3105-77) (Xenorhabdus luminescens (strain 2)) protein is Outer membrane protein assembly factor BamC.